Consider the following 238-residue polypeptide: ATP synthase subunit O, mitochondrial (238 aa).

The N-terminal 36 residues, 1–36, are a transit peptide targeting the mitochondrion; that stretch reads MANRFRSGISFFKTIAVTDSVSSVRSKSLFPALRTY. At Thr-90 the chain carries Phosphothreonine.

This sequence belongs to the ATPase delta chain family. F-type ATPases have 2 components, CF(1) - the catalytic core - and CF(0) - the membrane proton channel. CF(1) has five subunits: alpha(3), beta(3), gamma(1), delta(1), epsilon(1). CF(0) has three main subunits: a, b and c.

The protein resides in the mitochondrion. It is found in the mitochondrion inner membrane. Its function is as follows. Mitochondrial membrane ATP synthase (F(1)F(0) ATP synthase or Complex V) produces ATP from ADP in the presence of a proton gradient across the membrane which is generated by electron transport complexes of the respiratory chain. F-type ATPases consist of two structural domains, F(1) - containing the extramembraneous catalytic core and F(0) - containing the membrane proton channel, linked together by a central stalk and a peripheral stalk. During catalysis, ATP synthesis in the catalytic domain of F(1) is coupled via a rotary mechanism of the central stalk subunits to proton translocation. Part of the complex F(0) domain and the peripheric stalk, which acts as a stator to hold the catalytic alpha(3)beta(3) subcomplex and subunit a/ATP6 static relative to the rotary elements. This chain is ATP synthase subunit O, mitochondrial, found in Arabidopsis thaliana (Mouse-ear cress).